Consider the following 120-residue polypeptide: Ribosome-binding factor A (120 aa).

Belongs to the RbfA family. As to quaternary structure, monomer. Binds 30S ribosomal subunits, but not 50S ribosomal subunits or 70S ribosomes.

The protein resides in the cytoplasm. Its function is as follows. One of several proteins that assist in the late maturation steps of the functional core of the 30S ribosomal subunit. Associates with free 30S ribosomal subunits (but not with 30S subunits that are part of 70S ribosomes or polysomes). Required for efficient processing of 16S rRNA. May interact with the 5'-terminal helix region of 16S rRNA. This is Ribosome-binding factor A from Clostridium botulinum (strain 657 / Type Ba4).